A 294-amino-acid chain; its full sequence is MSLFDWFADRRKGQFVGKVTQESEESDGLWEKCPECGQVVYRKDLIDNCSVCSNCGHHNRIDSKERIRIISDPNTFKSINNNLTPVDPLGFKDRRAYADRLRESQASTGLKDGVLTGTCEVNSIPMALAVMDFRFMGGSMGSVVGEKITRLIEHSTKEKLPLLIVCASGGARMQEGMLSLMQMAKISGALERHRDAQLLYMPLLTHPTTGGVTASFAMLGDLILAEPKALIGFAGRRVIEQTLREKLPDNFQTAEYLQDHGFVDTIVPRTELKETLAKILRLHKTQEVKLQTNA.

Residues 29–294 enclose the CoA carboxyltransferase N-terminal domain; it reads LWEKCPECGQ…TQEVKLQTNA (266 aa). Zn(2+) is bound by residues C33, C36, C52, and C55. The C4-type zinc finger occupies 33–55; that stretch reads CPECGQVVYRKDLIDNCSVCSNC.

This sequence belongs to the AccD/PCCB family. As to quaternary structure, acetyl-CoA carboxylase is a heterohexamer composed of biotin carboxyl carrier protein (AccB), biotin carboxylase (AccC) and two subunits each of ACCase subunit alpha (AccA) and ACCase subunit beta (AccD). It depends on Zn(2+) as a cofactor.

It is found in the cytoplasm. The catalysed reaction is N(6)-carboxybiotinyl-L-lysyl-[protein] + acetyl-CoA = N(6)-biotinyl-L-lysyl-[protein] + malonyl-CoA. The protein operates within lipid metabolism; malonyl-CoA biosynthesis; malonyl-CoA from acetyl-CoA: step 1/1. In terms of biological role, component of the acetyl coenzyme A carboxylase (ACC) complex. Biotin carboxylase (BC) catalyzes the carboxylation of biotin on its carrier protein (BCCP) and then the CO(2) group is transferred by the transcarboxylase to acetyl-CoA to form malonyl-CoA. This Prochlorococcus marinus (strain NATL1A) protein is Acetyl-coenzyme A carboxylase carboxyl transferase subunit beta.